The following is a 432-amino-acid chain: MVNEQIIDISGPLKGEIEVPGDKSMTHRAIMLASLAEGVSTIYKPLLGEDCRRTMDIFRLLGVEIKEDDEKLVVTSPGYQSFNTPHQVLYTGNSGTTTRLLAGLLSGLGIESVLSGDVSIGKRPMDRVLRPLKSMNANIEGIEDNYTPLIIKPSVIKGINYKMEVASAQVKSAILFASLFSKEATIIKELDVSRNHTETMFRHFNIPIEAEGLSITTTPEAIRYIKPADFHVPGDISSAAFFIVAALITPGSDVTIHNVGINPTRSGIIDIVEKMGGNIQLFNQTTGAEPTASIRIQYTPMLQPITIEGELVPKAIDELPVIALLCTQAVGTSTIKDAEELKVKETNRIDTTADMLNLLGFELQPTNDGLIIHPSEFKTNATVDSLTDHRIGMMLAVASLLSSEPVKIKQFDAVNVSFPGFLPKLKLLENEG.

3-phosphoshikimate-binding residues include lysine 23, serine 24, and arginine 28. Residue lysine 23 participates in phosphoenolpyruvate binding. Phosphoenolpyruvate contacts are provided by glycine 95 and arginine 123. Serine 167, glutamine 169, aspartate 317, and lysine 344 together coordinate 3-phosphoshikimate. Glutamine 169 contributes to the phosphoenolpyruvate binding site. The active-site Proton acceptor is aspartate 317. The phosphoenolpyruvate site is built by arginine 348 and arginine 390.

Belongs to the EPSP synthase family. As to quaternary structure, monomer.

It is found in the cytoplasm. The catalysed reaction is 3-phosphoshikimate + phosphoenolpyruvate = 5-O-(1-carboxyvinyl)-3-phosphoshikimate + phosphate. It participates in metabolic intermediate biosynthesis; chorismate biosynthesis; chorismate from D-erythrose 4-phosphate and phosphoenolpyruvate: step 6/7. Its function is as follows. Catalyzes the transfer of the enolpyruvyl moiety of phosphoenolpyruvate (PEP) to the 5-hydroxyl of shikimate-3-phosphate (S3P) to produce enolpyruvyl shikimate-3-phosphate and inorganic phosphate. This is 3-phosphoshikimate 1-carboxyvinyltransferase from Staphylococcus aureus (strain bovine RF122 / ET3-1).